The following is a 223-amino-acid chain: Protein NrfC (223 aa).

The segment at residues methionine 1 to alanine 27 is a signal peptide (tat-type signal). 4Fe-4S ferredoxin-type domains follow at residues tyrosine 37–glycine 65, valine 83–alanine 114, and glycine 116–valine 145. 16 residues coordinate [4Fe-4S] cluster: cysteine 46, cysteine 49, cysteine 52, cysteine 56, cysteine 92, cysteine 95, cysteine 100, cysteine 104, cysteine 125, cysteine 128, cysteine 131, cysteine 135, cysteine 152, cysteine 155, cysteine 168, and cysteine 172.

Post-translationally, predicted to be exported by the Tat system. The position of the signal peptide cleavage has not been experimentally proven.

In terms of biological role, probably involved in the transfer of electrons from the quinone pool to the type-c cytochromes. This is Protein NrfC (nrfC) from Escherichia coli O157:H7.